The following is a 193-amino-acid chain: Guanylate kinase (193 aa).

Positions 8–188 (GRLVVLVGPS…ACEQLVSLFV (181 aa)) constitute a Guanylate kinase-like domain. 15–22 (GPSAVGKS) contributes to the ATP binding site.

The protein belongs to the guanylate kinase family.

It localises to the cytoplasm. The catalysed reaction is GMP + ATP = GDP + ADP. Functionally, essential for recycling GMP and indirectly, cGMP. The polypeptide is Guanylate kinase (Nocardia farcinica (strain IFM 10152)).